The following is a 418-amino-acid chain: Probable endo-beta-1,4-glucanase celB (418 aa).

The signal sequence occupies residues 1 to 18; the sequence is MVRTFAVTALALLPLVAA. Asn46, Asn118, and Asn136 each carry an N-linked (GlcNAc...) asparagine glycan. Catalysis depends on Glu215, which acts as the Nucleophile. Glu220 serves as the catalytic Proton donor. Asn234 and Asn291 each carry an N-linked (GlcNAc...) asparagine glycan.

Belongs to the glycosyl hydrolase 7 (cellulase C) family.

It is found in the secreted. The enzyme catalyses Endohydrolysis of (1-&gt;4)-beta-D-glucosidic linkages in cellulose, lichenin and cereal beta-D-glucans.. In terms of biological role, has endoglucanase activity on substrates containing beta-1,4 glycosidic bonds, like in carboxymethylcellulose (CMC), hydroxyethylcellulose (HEC) and beta-glucan. Involved in the degradation of complex natural cellulosic substrates. The protein is Probable endo-beta-1,4-glucanase celB (celB) of Aspergillus clavatus (strain ATCC 1007 / CBS 513.65 / DSM 816 / NCTC 3887 / NRRL 1 / QM 1276 / 107).